The following is a 187-amino-acid chain: Orotate phosphoribosyltransferase (187 aa).

5-phospho-alpha-D-ribose 1-diphosphate-binding positions include Arg-103, Lys-104, Lys-107, and Glu-129–Ser-137. Thr-133 and Arg-161 together coordinate orotate.

Belongs to the purine/pyrimidine phosphoribosyltransferase family. PyrE subfamily. As to quaternary structure, homodimer. The cofactor is Mg(2+).

The catalysed reaction is orotidine 5'-phosphate + diphosphate = orotate + 5-phospho-alpha-D-ribose 1-diphosphate. Its pathway is pyrimidine metabolism; UMP biosynthesis via de novo pathway; UMP from orotate: step 1/2. Catalyzes the transfer of a ribosyl phosphate group from 5-phosphoribose 1-diphosphate to orotate, leading to the formation of orotidine monophosphate (OMP). The protein is Orotate phosphoribosyltransferase of Methanosarcina mazei (strain ATCC BAA-159 / DSM 3647 / Goe1 / Go1 / JCM 11833 / OCM 88) (Methanosarcina frisia).